The chain runs to 1331 residues: ABC multidrug transporter MDR2 (1331 aa).

Composition is skewed to basic and acidic residues over residues 1–20 (MVEV…KQEN) and 31–41 (SDKEKVAKKGN). Residues 1-51 (MVEVSEKPNTQDDGVSKQENRNPASSSSSTSDKEKVAKKGNSDATKSSTPE) form a disordered region. The next 4 membrane-spanning stretches (helical) occupy residues 93–113 (MIFL…LPLF), 147–167 (YFVY…VGFI), 219–239 (KVGL…IGYV), and 242–262 (WKLA…MGGI). The 291-residue stretch at 97–387 (AIVSLASIAA…VAPNTQAFAS (291 aa)) folds into the ABC transmembrane type-1 1 domain. A glycan (N-linked (GlcNAc...) asparagine) is linked at N293. A run of 2 helical transmembrane segments spans residues 325–345 (LGIM…LGFW) and 358–378 (LSAI…IGNV). In terms of domain architecture, ABC transporter 1 spans 422–667 (IEFRGIKHIY…KGTYLQLVEA (246 aa)). Residue 457 to 464 (GPSGSGKS) coordinates ATP. N529 and N737 each carry an N-linked (GlcNAc...) asparagine glycan. Helical transmembrane passes span 762–782 (LCGF…SVFF) and 810–830 (FLML…IFAI). Residues 764–1051 (GFFFAVLSGA…VFSFSPDMGK (288 aa)) form the ABC transmembrane type-1 2 domain. N860 is a glycosylation site (N-linked (GlcNAc...) asparagine). Transmembrane regions (helical) follow at residues 884-904 (LGTI…ALAF), 910-930 (LVCI…FWIL), 995-1015 (ASQS…GGLL), and 1025-1045 (FFLC…VFSF). Residues 1086–1324 (IEFRDVHFRY…KGRYYELVHM (239 aa)) enclose the ABC transporter 2 domain. A glycan (N-linked (GlcNAc...) asparagine) is linked at N1108. Residue 1121 to 1128 (GPSGCGKS) participates in ATP binding.

This sequence belongs to the ABC transporter superfamily. ABCB family. Multidrug resistance exporter (TC 3.A.1.201) subfamily.

It localises to the cell membrane. It carries out the reaction itraconazole(in) + ATP + H2O = itraconazole(out) + ADP + phosphate + H(+). Pleiotropic ABC efflux transporter that may be involved in the modulation susceptibility to a wide range of unrelated cytotoxic compounds. The chain is ABC multidrug transporter MDR2 from Trichophyton equinum (strain ATCC MYA-4606 / CBS 127.97) (Horse ringworm fungus).